The primary structure comprises 280 residues: Large ribosomal subunit protein uL2 (280 aa).

Disordered stretches follow at residues Ser-32–Met-54 and Arg-221–Lys-280. Residues Asn-37 to Val-49 show a composition bias toward polar residues. The segment covering Met-232–Gly-242 has biased composition (gly residues). Over residues Lys-257 to Lys-280 the composition is skewed to basic residues.

It belongs to the universal ribosomal protein uL2 family. In terms of assembly, part of the 50S ribosomal subunit. Forms a bridge to the 30S subunit in the 70S ribosome.

One of the primary rRNA binding proteins. Required for association of the 30S and 50S subunits to form the 70S ribosome, for tRNA binding and peptide bond formation. It has been suggested to have peptidyltransferase activity; this is somewhat controversial. Makes several contacts with the 16S rRNA in the 70S ribosome. In Chloroherpeton thalassium (strain ATCC 35110 / GB-78), this protein is Large ribosomal subunit protein uL2.